A 207-amino-acid chain; its full sequence is Imidazole glycerol phosphate synthase subunit HisH (207 aa).

Residues 1–206 form the Glutamine amidotransferase type-1 domain; sequence MMIVIDYDAG…KEYVYENTAR (206 aa). C79 functions as the Nucleophile in the catalytic mechanism. Catalysis depends on residues H181 and E183.

Heterodimer of HisH and HisF.

The protein localises to the cytoplasm. The enzyme catalyses 5-[(5-phospho-1-deoxy-D-ribulos-1-ylimino)methylamino]-1-(5-phospho-beta-D-ribosyl)imidazole-4-carboxamide + L-glutamine = D-erythro-1-(imidazol-4-yl)glycerol 3-phosphate + 5-amino-1-(5-phospho-beta-D-ribosyl)imidazole-4-carboxamide + L-glutamate + H(+). The catalysed reaction is L-glutamine + H2O = L-glutamate + NH4(+). The protein operates within amino-acid biosynthesis; L-histidine biosynthesis; L-histidine from 5-phospho-alpha-D-ribose 1-diphosphate: step 5/9. Functionally, IGPS catalyzes the conversion of PRFAR and glutamine to IGP, AICAR and glutamate. The HisH subunit catalyzes the hydrolysis of glutamine to glutamate and ammonia as part of the synthesis of IGP and AICAR. The resulting ammonia molecule is channeled to the active site of HisF. This chain is Imidazole glycerol phosphate synthase subunit HisH, found in Streptococcus sanguinis (strain SK36).